Reading from the N-terminus, the 322-residue chain is Uracil-DNA glycosylase (322 aa).

D142 (proton acceptor) is an active-site residue.

This sequence belongs to the uracil-DNA glycosylase (UDG) superfamily. UNG family.

It is found in the mitochondrion. It localises to the nucleus. The enzyme catalyses Hydrolyzes single-stranded DNA or mismatched double-stranded DNA and polynucleotides, releasing free uracil.. Its function is as follows. Excises uracil residues from the DNA which can arise as a result of misincorporation of dUMP residues by DNA polymerase or due to deamination of cytosine. The protein is Uracil-DNA glycosylase (ung1) of Schizosaccharomyces pombe (strain 972 / ATCC 24843) (Fission yeast).